Here is a 390-residue protein sequence, read N- to C-terminus: Dihydroorotase (390 aa).

Zn(2+) is bound by residues histidine 54 and histidine 56. Substrate contacts are provided by residues 56-58 (HIR) and asparagine 88. 4 residues coordinate Zn(2+): lysine 136, histidine 160, histidine 197, and aspartate 259. The residue at position 136 (lysine 136) is an N6-carboxylysine. Residue aspartate 259 is part of the active site. Residues histidine 263 and 277-278 (PG) each bind substrate.

Belongs to the metallo-dependent hydrolases superfamily. DHOase family. Class I DHOase subfamily. Zn(2+) is required as a cofactor.

It carries out the reaction (S)-dihydroorotate + H2O = N-carbamoyl-L-aspartate + H(+). It participates in pyrimidine metabolism; UMP biosynthesis via de novo pathway; (S)-dihydroorotate from bicarbonate: step 3/3. Catalyzes the reversible cyclization of carbamoyl aspartate to dihydroorotate. In Saccharolobus solfataricus (strain ATCC 35092 / DSM 1617 / JCM 11322 / P2) (Sulfolobus solfataricus), this protein is Dihydroorotase.